A 119-amino-acid polypeptide reads, in one-letter code: Acidic phospholipase A2 CM-II (119 aa).

7 cysteine pairs are disulfide-bonded: C11–C71, C26–C118, C28–C44, C43–C99, C50–C92, C60–C85, and C78–C90. Ca(2+)-binding residues include F27, G29, and G31. H47 is a catalytic residue. D48 is a Ca(2+) binding site. The active site involves D93.

The protein belongs to the phospholipase A2 family. Group I subfamily. D49 sub-subfamily. It depends on Ca(2+) as a cofactor. As to expression, expressed by the venom gland.

Its subcellular location is the secreted. It catalyses the reaction a 1,2-diacyl-sn-glycero-3-phosphocholine + H2O = a 1-acyl-sn-glycero-3-phosphocholine + a fatty acid + H(+). Functionally, PLA2 catalyzes the calcium-dependent hydrolysis of the 2-acyl groups in 3-sn-phosphoglycerides. The sequence is that of Acidic phospholipase A2 CM-II from Aspidelaps scutatus (Shield-nose snake).